The sequence spans 555 residues: MRSKKMTHGLEKAPHRSLLHALGLTREEIERPLVGVVNAANEVVPGHVHLHTIAEAVKAGVRAAGGTPMEFPAIAVCDGLAMNHEGMHFSLPSREIIADSIEIMATAHPFDALVFIPNCDKSVPGMLMAMLRMDIPSIMVSGGPMLAGGTLAGRTDLISVFEAVGRVQRGDMTMAELDEMTETACPGCGSCAGMFTANTMNCMAETMGLALPGNGTIPAVTAARVRLAKHAGMKVMELLEKNITPRSIVTPRAVANAVAVDMALGGSTNTVLHLPAVFGEAGLDLTLDIFDEVSRKTPNLCKLSPAGHHHIQDLHAAGGIPAVMAELTRKGLVDTSVMTVTGKTLAENLAELNARVLNPDVIRSADAPYSAQGGIAILKGSLAPQGAVVKQSAVAPEMMVREAVARVFDSEGEAHAAIMGGKINKGDAIIIRYEGPRGGPGMREMLSPTAAIAGMGLGADVALITDGRFSGGTRGAAIGHVSPEAADGGNIGLVREGDHILIDIPARRLDLLVDEAELAARRETFVPLEKPVTSPLLRRYARQVTSAATGAMYRK.

Aspartate 78 is a Mg(2+) binding site. Cysteine 119 contacts [2Fe-2S] cluster. Mg(2+) is bound by residues aspartate 120 and lysine 121. Lysine 121 is subject to N6-carboxylysine. Cysteine 191 contributes to the [2Fe-2S] cluster binding site. Residue glutamate 444 coordinates Mg(2+). Serine 470 functions as the Proton acceptor in the catalytic mechanism.

It belongs to the IlvD/Edd family. Homodimer. [2Fe-2S] cluster is required as a cofactor. Mg(2+) serves as cofactor.

It catalyses the reaction (2R)-2,3-dihydroxy-3-methylbutanoate = 3-methyl-2-oxobutanoate + H2O. It carries out the reaction (2R,3R)-2,3-dihydroxy-3-methylpentanoate = (S)-3-methyl-2-oxopentanoate + H2O. It functions in the pathway amino-acid biosynthesis; L-isoleucine biosynthesis; L-isoleucine from 2-oxobutanoate: step 3/4. The protein operates within amino-acid biosynthesis; L-valine biosynthesis; L-valine from pyruvate: step 3/4. Functions in the biosynthesis of branched-chain amino acids. Catalyzes the dehydration of (2R,3R)-2,3-dihydroxy-3-methylpentanoate (2,3-dihydroxy-3-methylvalerate) into 2-oxo-3-methylpentanoate (2-oxo-3-methylvalerate) and of (2R)-2,3-dihydroxy-3-methylbutanoate (2,3-dihydroxyisovalerate) into 2-oxo-3-methylbutanoate (2-oxoisovalerate), the penultimate precursor to L-isoleucine and L-valine, respectively. The chain is Dihydroxy-acid dehydratase from Nitratidesulfovibrio vulgaris (strain DSM 19637 / Miyazaki F) (Desulfovibrio vulgaris).